Here is a 113-residue protein sequence, read N- to C-terminus: uncharacterized protein (113 aa).

Disordered regions lie at residues 1–22 (MGEH…PLAQ) and 90–113 (DGRH…SDDL). The segment covering 90–99 (DGRHTTESSF) has biased composition (basic and acidic residues). Positions 100-113 (EHSSPSRSPQSDDL) are enriched in low complexity.

This is an uncharacterized protein from Mycobacterium tuberculosis (strain ATCC 25618 / H37Rv).